We begin with the raw amino-acid sequence, 365 residues long: Ribosomal RNA large subunit methyltransferase M (365 aa).

S-adenosyl-L-methionine-binding positions include serine 187, 220–223 (CPGG), aspartate 239, aspartate 259, and aspartate 276. Residue lysine 305 is the Proton acceptor of the active site.

The protein belongs to the class I-like SAM-binding methyltransferase superfamily. RNA methyltransferase RlmE family. RlmM subfamily. In terms of assembly, monomer.

It localises to the cytoplasm. The enzyme catalyses cytidine(2498) in 23S rRNA + S-adenosyl-L-methionine = 2'-O-methylcytidine(2498) in 23S rRNA + S-adenosyl-L-homocysteine + H(+). Its function is as follows. Catalyzes the 2'-O-methylation at nucleotide C2498 in 23S rRNA. The sequence is that of Ribosomal RNA large subunit methyltransferase M from Psychromonas ingrahamii (strain DSM 17664 / CCUG 51855 / 37).